Consider the following 331-residue polypeptide: DNA polymerase III subunit delta (331 aa).

The protein belongs to the DNA polymerase HolA subunit family. As to quaternary structure, DNA polymerase III contains a core (composed of alpha, epsilon and theta chains) that associates with a tau subunit. This core dimerizes to form the POLIII' complex. PolIII' associates with the gamma complex (composed of gamma, delta, delta', psi and chi chains) and with the beta chain to form the complete DNA polymerase III complex.

It catalyses the reaction DNA(n) + a 2'-deoxyribonucleoside 5'-triphosphate = DNA(n+1) + diphosphate. Functionally, DNA polymerase III is a complex, multichain enzyme responsible for most of the replicative synthesis in bacteria. This DNA polymerase also exhibits 3' to 5' exonuclease activity. The delta subunit seems to interact with the gamma subunit to transfer the beta subunit on the DNA. The protein is DNA polymerase III subunit delta (holA) of Buchnera aphidicola subsp. Acyrthosiphon pisum (strain APS) (Acyrthosiphon pisum symbiotic bacterium).